Here is a 456-residue protein sequence, read N- to C-terminus: Amino acid transporter AVT6B (456 aa).

The next 11 membrane-spanning stretches (helical) occupy residues 37-57, 58-78, 118-138, 164-184, 191-211, 236-256, 273-293, 328-348, 365-385, 388-408, and 423-443; these read FSGA…MALP, ATMK…MAFL, ILVS…DVLA, TFVL…FKRI, SAIS…ITII, LFTV…VHSI, ALAM…LLFG, LMLV…GLIF, SITA…PSIW, FQFT…AAVI, and IAIC…YSDA.

Belongs to the amino acid/polyamine transporter 2 family. Amino acid/auxin permease (AAAP) (TC 2.A.18.6) subfamily.

It is found in the membrane. This chain is Amino acid transporter AVT6B, found in Arabidopsis thaliana (Mouse-ear cress).